A 547-amino-acid polypeptide reads, in one-letter code: Dihydrolipoyllysine-residue acetyltransferase component of pyruvate dehydrogenase complex (547 aa).

Residues 2-75 (SELIRVPDIG…KEGDEILELE (74 aa)) form the Lipoyl-binding 1 domain. K41 carries the post-translational modification N6-lipoyllysine. A disordered region spans residues 75–117 (EVEGGEQPAEAKAEAAPAQPEAPKAEAPAPAPSESKPAAPAAA). A compositionally biased stretch (low complexity) spans 80–117 (EQPAEAKAEAAPAQPEAPKAEAPAPAPSESKPAAPAAA). Residues 119 to 193 (VQDIKVPDIG…GTGDLILKLK (75 aa)) enclose the Lipoyl-binding 2 domain. An N6-lipoyllysine modification is found at K159. Residues 202-231 (EEQPAAAPAQAAAPAAEQKPAAAAPAPAKA) show a composition bias toward low complexity. Residues 202–248 (EEQPAAAPAQAAAPAAEQKPAAAAPAPAKADTPAPVGAPSRDGAKVH) are disordered. A Peripheral subunit-binding (PSBD) domain is found at 248-285 (HAGPAVRMLAREFGVELSEVKASGPKGRILKEDVQVFV). H520 is a catalytic residue.

Belongs to the 2-oxoacid dehydrogenase family. Forms a 24-polypeptide structural core with octahedral symmetry. (R)-lipoate serves as cofactor.

It carries out the reaction N(6)-[(R)-dihydrolipoyl]-L-lysyl-[protein] + acetyl-CoA = N(6)-[(R)-S(8)-acetyldihydrolipoyl]-L-lysyl-[protein] + CoA. The pyruvate dehydrogenase complex catalyzes the overall conversion of pyruvate to acetyl-CoA and CO(2). It contains multiple copies of three enzymatic components: pyruvate dehydrogenase (E1), dihydrolipoamide acetyltransferase (E2) and lipoamide dehydrogenase (E3). The protein is Dihydrolipoyllysine-residue acetyltransferase component of pyruvate dehydrogenase complex (aceF) of Pseudomonas aeruginosa (strain ATCC 15692 / DSM 22644 / CIP 104116 / JCM 14847 / LMG 12228 / 1C / PRS 101 / PAO1).